The sequence spans 103 residues: Ubiquitin-related modifier 1 (103 aa).

Position 103 is a 1-thioglycine (Gly-103). Gly-103 is covalently cross-linked (Glycyl lysine isopeptide (Gly-Lys) (interchain with K-? in acceptor proteins)).

It belongs to the URM1 family. C-terminal thiocarboxylation occurs in 2 steps, it is first acyl-adenylated (-COAMP) via the hesA/moeB/thiF part of UBA4, then thiocarboxylated (-COSH) via the rhodanese domain of UBA4.

It localises to the cytoplasm. Its pathway is tRNA modification; 5-methoxycarbonylmethyl-2-thiouridine-tRNA biosynthesis. In terms of biological role, acts as a sulfur carrier required for 2-thiolation of mcm(5)S(2)U at tRNA wobble positions of cytosolic tRNA(Lys), tRNA(Glu) and tRNA(Gln). Serves as sulfur donor in tRNA 2-thiolation reaction by being thiocarboxylated (-COSH) at its C-terminus by the MOCS3 homolog UBA4. The sulfur is then transferred to tRNA to form 2-thiolation of mcm(5)S(2)U. Prior mcm(5) tRNA modification by the elongator complex is required for 2-thiolation. Also acts as a ubiquitin-like protein (UBL) that is covalently conjugated via an isopeptide bond to lysine residues of target proteins such as AHP1. The thiocarboxylated form serves as substrate for conjugation and oxidative stress specifically induces the formation of UBL-protein conjugates. In Vanderwaltozyma polyspora (strain ATCC 22028 / DSM 70294 / BCRC 21397 / CBS 2163 / NBRC 10782 / NRRL Y-8283 / UCD 57-17) (Kluyveromyces polysporus), this protein is Ubiquitin-related modifier 1.